The following is a 734-amino-acid chain: Rho GTPase-activating protein gacL (734 aa).

Positions 141 to 339 constitute a Rho-GAP domain; the sequence is ISLDTLIAKE…QMILHYDTLF (199 aa). 3 WD repeats span residues 381–430, 539–579, and 585–623; these read GHNK…FIKE, LFMK…TIHQ, and KRPKRMACIEIDDTEYIWIGGDEGSIQIFNSKTFKLEHK.

It is found in the cytoplasm. Functionally, rho GTPase-activating protein involved in the signal transduction pathway. The chain is Rho GTPase-activating protein gacL (gacL) from Dictyostelium discoideum (Social amoeba).